A 732-amino-acid chain; its full sequence is Photosystem I P700 chlorophyll a apoprotein A1 (732 aa).

Transmembrane regions (helical) follow at residues 61–84 (VFSSGLAHFSIVFFWLGGMHFHGA), 145–168 (LKYAAAAALIGSIATLWAAYFHMH), 185–209 (NAGQLAILAGLGSISWAGHQIHIAL), 278–296 (IASHHFFVGITCIISGIIA), 317–340 (WHSRLSINLAIAGSLSITFAHHIY), 356–382 (LSLFVHHMWIGGFFIVGAGAHASIFMI), 414–436 (IIMGHLIYVTIALGMHAFGIYIH), and 510–528 (FMVHHIHAFTIHCTLLILM). Cysteine 552 and cysteine 561 together coordinate [4Fe-4S] cluster. Transmembrane regions (helical) follow at residues 568–589 (HVFLGVFWMYNSLSIVIFHFFW) and 644–666 (LSGYGLIFLGAHFTWAFSLMFLW). Histidine 655 serves as a coordination point for chlorophyll a'. Methionine 663 and tyrosine 671 together coordinate chlorophyll a. Position 672 (tryptophan 672) interacts with phylloquinone. Residues 704–724 (AVGLVHYMLGGIGTTWAFFLA) traverse the membrane as a helical segment.

It belongs to the PsaA/PsaB family. The PsaA/B heterodimer binds the P700 chlorophyll special pair and subsequent electron acceptors. PSI consists of a core antenna complex that captures photons, and an electron transfer chain that converts photonic excitation into a charge separation. The eukaryotic PSI reaction center is composed of at least 11 subunits. It depends on P700 is a chlorophyll a/chlorophyll a' dimer, A0 is one or more chlorophyll a, A1 is one or both phylloquinones and FX is a shared 4Fe-4S iron-sulfur center. as a cofactor.

Its subcellular location is the plastid. It localises to the chloroplast thylakoid membrane. The enzyme catalyses reduced [plastocyanin] + hnu + oxidized [2Fe-2S]-[ferredoxin] = oxidized [plastocyanin] + reduced [2Fe-2S]-[ferredoxin]. Its function is as follows. PsaA and PsaB bind P700, the primary electron donor of photosystem I (PSI), as well as the electron acceptors A0, A1 and FX. PSI is a plastocyanin/cytochrome c6-ferredoxin oxidoreductase, converting photonic excitation into a charge separation, which transfers an electron from the donor P700 chlorophyll pair to the spectroscopically characterized acceptors A0, A1, FX, FA and FB in turn. Oxidized P700 is reduced on the lumenal side of the thylakoid membrane by plastocyanin or cytochrome c6. The protein is Photosystem I P700 chlorophyll a apoprotein A1 of Heterocapsa triquetra (Dinoflagellate).